Consider the following 100-residue polypeptide: Small ribosomal subunit protein uS14c (100 aa).

It belongs to the universal ribosomal protein uS14 family. Part of the 30S ribosomal subunit.

The protein localises to the plastid. Its subcellular location is the chloroplast. In terms of biological role, binds 16S rRNA, required for the assembly of 30S particles. This chain is Small ribosomal subunit protein uS14c, found in Ceratophyllum demersum (Rigid hornwort).